Consider the following 396-residue polypeptide: GTPase Obg (396 aa).

Residues 1-159 (MKFVDEASIY…RTLKLEMKVL (159 aa)) enclose the Obg domain. The interval 120 to 146 (GGHHGLGNTRFKSSTNRAPRQTTKGTV) is disordered. Over residues 129 to 144 (RFKSSTNRAPRQTTKG) the composition is skewed to polar residues. Residues 160–333 (ADVGLLGLPN…LCLDLMTALD (174 aa)) form the OBG-type G domain. GTP is bound by residues 166–173 (GLPNAGKS), 191–195 (FTTLV), 213–216 (DIPG), 283–286 (NKTD), and 314–316 (SAI). The Mg(2+) site is built by Ser173 and Thr193.

Belongs to the TRAFAC class OBG-HflX-like GTPase superfamily. OBG GTPase family. Monomer. The cofactor is Mg(2+).

The protein resides in the cytoplasm. Its function is as follows. An essential GTPase which binds GTP, GDP and possibly (p)ppGpp with moderate affinity, with high nucleotide exchange rates and a fairly low GTP hydrolysis rate. Plays a role in control of the cell cycle, stress response, ribosome biogenesis and in those bacteria that undergo differentiation, in morphogenesis control. In Marinomonas sp. (strain MWYL1), this protein is GTPase Obg.